The chain runs to 224 residues: ATP synthase subunit b (224 aa).

Residues 2–22 (TPSLGLIFWQSVIFLISFIIL) form a helical membrane-spanning segment.

This sequence belongs to the ATPase B chain family. F-type ATPases have 2 components, F(1) - the catalytic core - and F(0) - the membrane proton channel. F(1) has five subunits: alpha(3), beta(3), gamma(1), delta(1), epsilon(1). F(0) has three main subunits: a(1), b(2) and c(10-14). The alpha and beta chains form an alternating ring which encloses part of the gamma chain. F(1) is attached to F(0) by a central stalk formed by the gamma and epsilon chains, while a peripheral stalk is formed by the delta and b chains.

It is found in the cell membrane. F(1)F(0) ATP synthase produces ATP from ADP in the presence of a proton or sodium gradient. F-type ATPases consist of two structural domains, F(1) containing the extramembraneous catalytic core and F(0) containing the membrane proton channel, linked together by a central stalk and a peripheral stalk. During catalysis, ATP synthesis in the catalytic domain of F(1) is coupled via a rotary mechanism of the central stalk subunits to proton translocation. In terms of biological role, component of the F(0) channel, it forms part of the peripheral stalk, linking F(1) to F(0). This chain is ATP synthase subunit b, found in Karelsulcia muelleri (strain GWSS) (Sulcia muelleri).